The chain runs to 177 residues: Transmembrane protein 196 (177 aa).

4 helical membrane-spanning segments follow: residues 11-31 (LLVL…VGAV), 47-67 (SSPV…IFCA), 73-93 (LIMI…ILNI), and 106-126 (LYSL…GCTI). Over residues 152–162 (HSHEMTEKDTE) the composition is skewed to basic and acidic residues. The disordered stretch occupies residues 152–177 (HSHEMTEKDTENITNGGGPLALNGRV).

It is found in the cytoplasm. The protein resides in the membrane. The chain is Transmembrane protein 196 (tmem196) from Xenopus tropicalis (Western clawed frog).